Consider the following 232-residue polypeptide: Enolase-phosphatase E1 (232 aa).

Belongs to the HAD-like hydrolase superfamily. MasA/MtnC family. Monomer. It depends on Mg(2+) as a cofactor.

The enzyme catalyses 5-methylsulfanyl-2,3-dioxopentyl phosphate + H2O = 1,2-dihydroxy-5-(methylsulfanyl)pent-1-en-3-one + phosphate. It functions in the pathway amino-acid biosynthesis; L-methionine biosynthesis via salvage pathway; L-methionine from S-methyl-5-thio-alpha-D-ribose 1-phosphate: step 3/6. Its pathway is amino-acid biosynthesis; L-methionine biosynthesis via salvage pathway; L-methionine from S-methyl-5-thio-alpha-D-ribose 1-phosphate: step 4/6. Bifunctional enzyme that catalyzes the enolization of 2,3-diketo-5-methylthiopentyl-1-phosphate (DK-MTP-1-P) into the intermediate 2-hydroxy-3-keto-5-methylthiopentenyl-1-phosphate (HK-MTPenyl-1-P), which is then dephosphorylated to form the acireductone 1,2-dihydroxy-3-keto-5-methylthiopentene (DHK-MTPene). The polypeptide is Enolase-phosphatase E1 (Nocardia farcinica (strain IFM 10152)).